Consider the following 204-residue polypeptide: uncharacterized protein (204 aa).

This is an uncharacterized protein from Caenorhabditis elegans.